Here is a 197-residue protein sequence, read N- to C-terminus: MTKGRKIIKVVIIGEKSVGKTSILRRYVDKRFVTLKPTIGVDFVMVSENMVTLQLWDTSGQERFRSLEISYYRGADYCILVFDVTNEKTLYDLKLWRDDFIEKTEIRDPILFPFIILGNKIDDPNRVVTEKAAIQWCKDNIGGNLTYFDTSAKDNINIEQVFKHISNQCENQPQSNEIPPEQLISLTEKKSNQSSCC.

Residues 14–21 (GEKSVGKT), 33–38 (VTLKPT), 57–61 (DTSGQ), 119–122 (NKID), and 152–153 (AK) contribute to the GTP site. The Effector region motif lies at 31–39 (RFVTLKPTI). S-geranylgeranyl cysteine attachment occurs at residues cysteine 196 and cysteine 197.

It belongs to the small GTPase superfamily. Rab family.

Its function is as follows. Protein transport. Probably involved in vesicular traffic. The polypeptide is Ras-related protein Rab-7B (rab7B) (Dictyostelium discoideum (Social amoeba)).